The chain runs to 625 residues: MCGIVGFVGRTSVPDRDYFALDVVLEGLRRLEYRGYDSAGVAVVADGAVSFRKKAGKVQALEQELETSPMPQSCLGIGHTRWATHGGPTDANAHPHVVDGGKLAVVHNGIIENFAELKSELLGFGHNFVSETDTEVAATLLGHIFNNEANKDLTRAMQLTCQRLEGAFTLLAIHAETPDRIVAARRNSPLVIGVGEGENFLGSDVSGFIDYTKNAVEMDNDQIVTITADGYHITDFQGNHAEGKPFVVEWDAQAAEKGGYEFFMEKEIHEQPAAVRDTLMGRFDESGKLTLDELRIDESTLRSIDKIIVIACGTAAYAGHVARYAIEHWCRIPTEVELAHEFRYRDPIVNEKTLVVTLSQSGETMDTLMAVRHAREQGAKVIAICNTNGSSIPRESDACLYTHAGPEIAVASTKAFLAQITATYLLGLYLAQLRGNMFADEVNAVLGELRTIPDKVSAVLDGVEDQVKTLAQDMKDATSVLFLGRHVGFPVALEGALKLKELAYLHAEGFAAGELKHGPIALIEEGQPVFVIVPSPRGRDSLHAKVVSNIQEVRARGAITIVIAEEGDDAVEAYANHIIRIPQAPTLMQPLLATVPLQIFACGVAAAKGFDVDQPRNLAKSVTVE.

Cys2 (nucleophile; for GATase activity) is an active-site residue. Residues 2 to 229 form the Glutamine amidotransferase type-2 domain; sequence CGIVGFVGRT…NDQIVTITAD (228 aa). SIS domains follow at residues 296–436 and 470–615; these read IDES…LRGN and LAQD…VDQP. Catalysis depends on Lys620, which acts as the For Fru-6P isomerization activity.

In terms of assembly, homodimer.

Its subcellular location is the cytoplasm. It catalyses the reaction D-fructose 6-phosphate + L-glutamine = D-glucosamine 6-phosphate + L-glutamate. Catalyzes the first step in hexosamine metabolism, converting fructose-6P into glucosamine-6P using glutamine as a nitrogen source. This Corynebacterium diphtheriae (strain ATCC 700971 / NCTC 13129 / Biotype gravis) protein is Glutamine--fructose-6-phosphate aminotransferase [isomerizing].